The primary structure comprises 504 residues: Anaerobic nitric oxide reductase transcription regulator NorR (504 aa).

The residue at position 57 (aspartate 57) is a 4-aspartylphosphate. One can recognise a Sigma-54 factor interaction domain in the interval 187–416 (MIGLSPGMTQ…LEHAIHRAVV (230 aa)). Residues 215–222 (GETGTGKE) and 278–287 (ADNGTLFLDE) contribute to the ATP site. Residues 479–498 (WAACARMLETDVANLHRLAK) constitute a DNA-binding region (H-T-H motif).

It functions in the pathway nitrogen metabolism; nitric oxide reduction. Its function is as follows. Required for the expression of anaerobic nitric oxide (NO) reductase, acts as a transcriptional activator for at least the norVW operon. Activation also requires sigma-54. This Escherichia coli O157:H7 protein is Anaerobic nitric oxide reductase transcription regulator NorR.